The following is a 105-amino-acid chain: Large ribosomal subunit protein bL21 (105 aa).

Belongs to the bacterial ribosomal protein bL21 family. As to quaternary structure, part of the 50S ribosomal subunit. Contacts protein L20.

Functionally, this protein binds to 23S rRNA in the presence of protein L20. The sequence is that of Large ribosomal subunit protein bL21 from Rhizobium etli (strain ATCC 51251 / DSM 11541 / JCM 21823 / NBRC 15573 / CFN 42).